We begin with the raw amino-acid sequence, 30 residues long: Cyclotide cter-F (30 aa).

A cross-link (cyclopeptide (Gly-Asp)) is located at residues 1 to 30 (GIPCGESCVFIPCISSVVGCSCKSKVCYLD). Cystine bridges form between cysteine 4–cysteine 20, cysteine 8–cysteine 22, and cysteine 13–cysteine 27.

Contains 3 disulfide bonds. Post-translationally, this is a cyclic peptide.

Probably participates in a plant defense mechanism. In Clitoria ternatea (Butterfly pea), this protein is Cyclotide cter-F.